The sequence spans 71 residues: Ceratotoxin-A (71 aa).

An N-terminal signal peptide occupies residues 1-23 (MANLKAVFLICIVAFIALQCVVA). 2 consecutive propeptides follow at residues 24–35 (EPAAEDSVVVKR) and 65–71 (VAAGLVG).

In terms of assembly, homomer of four to six subunits.

The protein resides in the secreted. Its function is as follows. Female-specific peptides with potent activity against Gram-positive and Gram-negative bacteria. They have as well hemolytic activity. This chain is Ceratotoxin-A (CTXA1), found in Ceratitis capitata (Mediterranean fruit fly).